Reading from the N-terminus, the 67-residue chain is UPF0435 protein SSP0913 (67 aa).

Belongs to the UPF0435 family.

In Staphylococcus saprophyticus subsp. saprophyticus (strain ATCC 15305 / DSM 20229 / NCIMB 8711 / NCTC 7292 / S-41), this protein is UPF0435 protein SSP0913.